We begin with the raw amino-acid sequence, 236 residues long: 2-C-methyl-D-erythritol 4-phosphate cytidylyltransferase (236 aa).

Belongs to the IspD/TarI cytidylyltransferase family. IspD subfamily. As to quaternary structure, homodimer.

It carries out the reaction 2-C-methyl-D-erythritol 4-phosphate + CTP + H(+) = 4-CDP-2-C-methyl-D-erythritol + diphosphate. It functions in the pathway isoprenoid biosynthesis; isopentenyl diphosphate biosynthesis via DXP pathway; isopentenyl diphosphate from 1-deoxy-D-xylulose 5-phosphate: step 2/6. In terms of biological role, catalyzes the formation of 4-diphosphocytidyl-2-C-methyl-D-erythritol from CTP and 2-C-methyl-D-erythritol 4-phosphate (MEP). The sequence is that of 2-C-methyl-D-erythritol 4-phosphate cytidylyltransferase from Escherichia coli O7:K1 (strain IAI39 / ExPEC).